A 716-amino-acid chain; its full sequence is Myogenesis-regulating glycosidase (716 aa).

Positions 1–11 are enriched in polar residues; sequence MSQNLQETSQA. Residues 1–26 form a disordered region; the sequence is MSQNLQETSQAYPRHRPGSHAGPKSL. Topologically, residues 1 to 55 are cytoplasmic; it reads MSQNLQETSQAYPRHRPGSHAGPKSLKVTPRATMYTFLPDNFSPAKPKPTKELRP. The helical; Signal-anchor for type II membrane protein transmembrane segment at 56–76 threads the bilayer; sequence LLCSAVLGLLLVLAAVVAWCY. The Extracellular segment spans residues 77 to 716; the sequence is YSASLRKAER…DEVAYFTWAS (640 aa). 3 N-linked (GlcNAc...) asparagine glycosylation sites follow: Asn-239, Asn-249, and Asn-455. Active-site residues include Asp-462 and Glu-465. Asp-527 functions as the Proton donor in the catalytic mechanism.

It belongs to the glycosyl hydrolase 31 family. As to quaternary structure, interacts with IGF2; this interaction is required for IGF2 secretion. Expressed in brain, liver, spleen, skeletal muscle, heart, lung and kidney. High expression is observed in the cerebellum, specifically in astrocytes. Highly expressed in skeletal muscle (at protein level).

It localises to the nucleus membrane. It is found in the endoplasmic reticulum membrane. Its function is as follows. Putative glycosidase. Promotes myogenesis by activating AKT signaling through the maturation and secretion of IGF2. The sequence is that of Myogenesis-regulating glycosidase (Myorg) from Mus musculus (Mouse).